Here is a 188-residue protein sequence, read N- to C-terminus: MSIMSDKWIREAVINHKMIEPFAEKQVRVKDSEKIISYGLSSYGYDARVSNEFKIFTNINSTMVDPKNFDKYNLVDREVDVCIIPPNSFALGRTVEYFKIPRDVLVICVGKSTYARCGIIVNVTPLEPEWEGHVTLEFSNTTPLPAKIYANEGACQFLFLKGDQICDLSYADRQGKYMKQLGVTLPLT.

DCTP contacts are provided by residues 111–116, 135–137, Gln-156, Tyr-170, Lys-179, and Gln-180; these read KSTYAR and TLE. The Proton donor/acceptor role is filled by Glu-137.

The protein belongs to the dCTP deaminase family. As to quaternary structure, homotrimer.

The enzyme catalyses dCTP + H2O + H(+) = dUTP + NH4(+). It participates in pyrimidine metabolism; dUMP biosynthesis; dUMP from dCTP (dUTP route): step 1/2. Functionally, catalyzes the deamination of dCTP to dUTP. The protein is dCTP deaminase of Rickettsia bellii (strain OSU 85-389).